The chain runs to 255 residues: tRNA (guanine-N(1)-)-methyltransferase (255 aa).

S-adenosyl-L-methionine-binding positions include Gly-113 and 133–138 (IGDYVL).

It belongs to the RNA methyltransferase TrmD family. Homodimer.

Its subcellular location is the cytoplasm. The catalysed reaction is guanosine(37) in tRNA + S-adenosyl-L-methionine = N(1)-methylguanosine(37) in tRNA + S-adenosyl-L-homocysteine + H(+). Functionally, specifically methylates guanosine-37 in various tRNAs. This Klebsiella pneumoniae subsp. pneumoniae (strain ATCC 700721 / MGH 78578) protein is tRNA (guanine-N(1)-)-methyltransferase.